Reading from the N-terminus, the 578-residue chain is MTSKVGPVALKTFREKLGPELLEVFDKSYKSFTDVQVLSGTHLLNLSDVVVESPTGSGKTLAFVLPMMRMIQNAKLQPADIGALILSPSRELCSQIVSVIQPFAEKLNLTVETVTGGQKVDKNIKMFKNKNVNILVATPGRLFQIIQHEKTLIARKMRTLQLLVIDEADRFNEIQFEDHMREILSCIPKQRRTGLFSATQVKEEDDLMVFGLRNAKQVKVAQERNSAAPSTLKNYYVECRADEKTSVCLEFIRQRTDKKILIFFPSCNSVRYFYKIFERCLGKRPLFAVHGKCSNPHRASQIKAFSDSTNGVMISTDVMARGIDISDIDWVIQFDLPKHSSWFVHRAGRTARCGREGNALILIASEQLAYVNFLDNHEKVKLDEIKVPTNNSRKSEELRQKMIKIQVSDRAILEAGTRAFVSHVESYAKHDCHLICSLDDLNVVGLANSYALLRLPKMRELSQRKDLDMFDRSAIETSEIKYADVKLEANRETVMKEKHEKKVETLAAKDKKRREKEARKLKKMGGRFRNGGGTGRKAEEKKALKRKAEEEDDAQNDIRLLKRIKRGKLSKKEIKDVL.

A Q motif motif is present at residues Pro-7–Val-37. In terms of domain architecture, Helicase ATP-binding spans Gly-40–Val-218. Ser-53–Thr-60 contacts ATP. A DEAD box motif is present at residues Asp-166–Asp-169. The Helicase C-terminal domain occupies Thr-231–Arg-393. Positions Ala-507–Asp-557 are disordered. Basic residues predominate over residues Asp-510–Gly-526. Over residues Arg-536 to Glu-549 the composition is skewed to basic and acidic residues.

This sequence belongs to the DEAD box helicase family. DDX55/SPB4 subfamily.

It catalyses the reaction ATP + H2O = ADP + phosphate + H(+). In terms of biological role, probable ATP-binding RNA helicase. This chain is Probable ATP-dependent RNA helicase DDX55 homolog, found in Caenorhabditis elegans.